The chain runs to 326 residues: UDP-N-acetylglucosamine transporter (326 aa).

Transmembrane regions (helical) follow at residues 4–24, 38–58, 136–156, 174–194, 212–232, 244–264, 269–289, and 293–313; these read NLKY…VLTM, LSST…ILLV, LGVY…FVQW, FVGL…GVYF, LGFF…GELV, LTWI…AVIK, ILKG…SYFW, and FVPT…TFLY.

This sequence belongs to the nucleotide-sugar transporter family. SLC35A subfamily. In terms of assembly, interacts with SLC35A2; the interaction is reduced in the presence of SLC35A4. Found in a complex with SLC35A2 and SLC35A4. Interacts with MGAT4B. O-Glcnacylation regulates the stability of SLC35A3 and the specific complex formation with MGAT4B.

The protein resides in the golgi apparatus membrane. It catalyses the reaction UMP(out) + UDP-N-acetyl-alpha-D-glucosamine(in) = UMP(in) + UDP-N-acetyl-alpha-D-glucosamine(out). Functionally, transports diphosphate-N-acetylglucosamine (UDP-GlcNAc) from the cytosol into the lumen of the Golgi apparatus, functioning as an antiporter that exchanges UDP-N-acetyl-alpha-D-glucosamine for UMP. May supply UDP-GlcNAc as substrate for Golgi-resident glycosyltransferases that generate highly branched, multiantennary complex N-glycans and keratan sulfate. However, the exact role of SLC35A3 still needs to be elucidated, it could be a member of a catalytically more efficient multiprotein complex rather than function independently as a single transporter. The protein is UDP-N-acetylglucosamine transporter (SLC35A3) of Bos taurus (Bovine).